Here is a 463-residue protein sequence, read N- to C-terminus: Glutamate--tRNA ligase 2 (463 aa).

Residues 11–21 (PSPTGYLHIGG) carry the 'HIGH' region motif. The short motif at 240 to 244 (KLSKR) is the 'KMSKS' region element. An ATP-binding site is contributed by K243.

Belongs to the class-I aminoacyl-tRNA synthetase family. Glutamate--tRNA ligase type 1 subfamily. Monomer.

Its subcellular location is the cytoplasm. It catalyses the reaction tRNA(Glu) + L-glutamate + ATP = L-glutamyl-tRNA(Glu) + AMP + diphosphate. Its function is as follows. Catalyzes the attachment of glutamate to tRNA(Glu) in a two-step reaction: glutamate is first activated by ATP to form Glu-AMP and then transferred to the acceptor end of tRNA(Glu). The sequence is that of Glutamate--tRNA ligase 2 from Campylobacter jejuni subsp. jejuni serotype O:6 (strain 81116 / NCTC 11828).